The chain runs to 159 residues: Ribosomal RNA large subunit methyltransferase H (159 aa).

Residues L76, G108, and 127–132 (FSKMTF) each bind S-adenosyl-L-methionine.

The protein belongs to the RNA methyltransferase RlmH family. As to quaternary structure, homodimer.

It localises to the cytoplasm. The catalysed reaction is pseudouridine(1915) in 23S rRNA + S-adenosyl-L-methionine = N(3)-methylpseudouridine(1915) in 23S rRNA + S-adenosyl-L-homocysteine + H(+). Its function is as follows. Specifically methylates the pseudouridine at position 1915 (m3Psi1915) in 23S rRNA. The protein is Ribosomal RNA large subunit methyltransferase H of Clostridium botulinum (strain Okra / Type B1).